The following is a 60-amino-acid chain: Cytotoxin 3 (60 aa).

4 cysteine pairs are disulfide-bonded: Cys-3-Cys-21, Cys-14-Cys-38, Cys-42-Cys-53, and Cys-54-Cys-59.

This sequence belongs to the three-finger toxin family. Short-chain subfamily. Type IA cytotoxin sub-subfamily. As to quaternary structure, monomer in solution; Homodimer and oligomer in the presence of negatively charged lipids forming a pore with a size ranging between 20 and 30 Angstroms. In terms of tissue distribution, expressed by the venom gland.

The protein resides in the secreted. Its subcellular location is the target cell membrane. Shows cytolytic activity on many different cells by forming pore in lipid membranes. In vivo, increases heart rate or kills the animal by cardiac arrest. In addition, it binds to heparin with high affinity, interacts with Kv channel-interacting protein 1 (KCNIP1) in a calcium-independent manner, and binds to integrin alpha-V/beta-3 (ITGAV/ITGB3) with moderate affinity. This is Cytotoxin 3 from Naja annulifera (Banded Egyptian cobra).